Consider the following 201-residue polypeptide: Small ribosomal subunit protein uS4c (201 aa).

Residues 14 to 43 (RLGALPGLTSKRPRAGSDLRNQSRPGKKSQ) form a disordered region. One can recognise an S4 RNA-binding domain in the interval 89 to 169 (MRLDNILFRL…LPKHLTFHTL (81 aa)).

It belongs to the universal ribosomal protein uS4 family. Part of the 30S ribosomal subunit. Contacts protein S5. The interaction surface between S4 and S5 is involved in control of translational fidelity.

Its subcellular location is the plastid. It is found in the chloroplast. Functionally, one of the primary rRNA binding proteins, it binds directly to 16S rRNA where it nucleates assembly of the body of the 30S subunit. Its function is as follows. With S5 and S12 plays an important role in translational accuracy. This chain is Small ribosomal subunit protein uS4c (rps4), found in Gossypium hirsutum (Upland cotton).